We begin with the raw amino-acid sequence, 85 residues long: MVEIVGSNYFNFPPTTLIVLALGSAIAYKFLSNISTNPYVPAVLGIILVFLGHGGVISTIGAGITGLAISRAIGKDVFNFLSKVS.

Helical transmembrane passes span Phe12–Ser32 and Leu44–Ile64.

It is found in the host membrane. The polypeptide is Putative transmembrane protein ORF85 (Acidianus convivator (ABV)).